An 83-amino-acid polypeptide reads, in one-letter code: Kunitz-type serine protease inhibitor blackelin-3 (83 aa).

The signal sequence occupies residues 1-24; it reads MSSGGLLLLLGLLTLWEVLTPVSS. A BPTI/Kunitz inhibitor domain is found at 31–81; that stretch reads CELPADPGPCNGLFQAFYYNPVQRKCLKFRYGGCKANPNTFKTIEECKRIC. 3 disulfides stabilise this stretch: cysteine 31/cysteine 81, cysteine 40/cysteine 64, and cysteine 56/cysteine 77.

The protein belongs to the venom Kunitz-type family. As to expression, expressed by the venom gland.

It is found in the secreted. Functionally, serine protease inhibitor. The chain is Kunitz-type serine protease inhibitor blackelin-3 from Pseudechis porphyriacus (Red-bellied black snake).